The following is a 234-amino-acid chain: Glucosamine-6-phosphate deaminase (234 aa).

The active-site Proton acceptor; for enolization step is the Asp62. Residue Asn128 is the For ring-opening step of the active site. Residue His130 is the Proton acceptor; for ring-opening step of the active site. Glu135 acts as the For ring-opening step in catalysis.

It belongs to the glucosamine/galactosamine-6-phosphate isomerase family. NagB subfamily.

The catalysed reaction is alpha-D-glucosamine 6-phosphate + H2O = beta-D-fructose 6-phosphate + NH4(+). Its pathway is amino-sugar metabolism; N-acetylneuraminate degradation; D-fructose 6-phosphate from N-acetylneuraminate: step 5/5. In terms of biological role, catalyzes the reversible isomerization-deamination of glucosamine 6-phosphate (GlcN6P) to form fructose 6-phosphate (Fru6P) and ammonium ion. The sequence is that of Glucosamine-6-phosphate deaminase from Lactobacillus delbrueckii subsp. bulgaricus (strain ATCC 11842 / DSM 20081 / BCRC 10696 / JCM 1002 / NBRC 13953 / NCIMB 11778 / NCTC 12712 / WDCM 00102 / Lb 14).